A 159-amino-acid chain; its full sequence is Superoxide dismutase [Cu-Zn] (159 aa).

Cu cation-binding residues include His47, His49, and His64. The cysteines at positions 58 and 150 are disulfide-linked. Zn(2+)-binding residues include His64, His72, His81, and Asp84. His121 contributes to the Cu cation binding site.

This sequence belongs to the Cu-Zn superoxide dismutase family. Cu cation is required as a cofactor. Zn(2+) serves as cofactor.

It is found in the cytoplasm. The enzyme catalyses 2 superoxide + 2 H(+) = H2O2 + O2. Functionally, destroys radicals which are normally produced within the cells and which are toxic to biological systems. The chain is Superoxide dismutase [Cu-Zn] (SOD) from Haemonchus contortus (Barber pole worm).